The sequence spans 297 residues: Transcription factor LRL3 (297 aa).

The segment at 59–109 is disordered; that stretch reads PDQFHHPQESGGPTMGSQEGLQPQGTVSTTSAPVVRQKPRVRARRGQATDP. Positions 73 to 90 are enriched in polar residues; it reads MGSQEGLQPQGTVSTTSA. A basic motif; degenerate region spans residues 105–118; it reads QATDPHSIAERLRR. The bHLH domain occupies 105–154; it reads QATDPHSIAERLRRERIAERMKSLQELVPNTNKTDKASMLDEIIEYVRFL. The segment at 119–154 is helix-loop-helix motif; it reads ERIAERMKSLQELVPNTNKTDKASMLDEIIEYVRFL.

In terms of assembly, homodimer. As to expression, expressed in trichomes of the root maturation zone. Detected constitutively in flowers.

The protein localises to the nucleus. Functionally, transcription factor that regulates the development of root hairs. Does not seem to be involved in the regulation of sperm cell development. This chain is Transcription factor LRL3, found in Arabidopsis thaliana (Mouse-ear cress).